Reading from the N-terminus, the 112-residue chain is UPF0145 protein LAF_1635 (112 aa).

The protein belongs to the UPF0145 family.

The sequence is that of UPF0145 protein LAF_1635 from Limosilactobacillus fermentum (strain NBRC 3956 / LMG 18251) (Lactobacillus fermentum).